The chain runs to 179 residues: UPF0227 protein Shewmr7_1806 (179 aa).

Belongs to the UPF0227 family.

The chain is UPF0227 protein Shewmr7_1806 from Shewanella sp. (strain MR-7).